Consider the following 476-residue polypeptide: Bifunctional protein HldE (476 aa).

The interval 1–318 is ribokinase; that stretch reads MKPVLPDYSK…AEAVHGSKDT (318 aa). 195 to 198 is a binding site for ATP; the sequence is NMSE. Residue Asp-264 is part of the active site. The interval 344–476 is cytidylyltransferase; it reads MTNGCFDILH…IIEAIKGGRG (133 aa).

In the N-terminal section; belongs to the carbohydrate kinase PfkB family. This sequence in the C-terminal section; belongs to the cytidylyltransferase family. Homodimer.

It catalyses the reaction D-glycero-beta-D-manno-heptose 7-phosphate + ATP = D-glycero-beta-D-manno-heptose 1,7-bisphosphate + ADP + H(+). The catalysed reaction is D-glycero-beta-D-manno-heptose 1-phosphate + ATP + H(+) = ADP-D-glycero-beta-D-manno-heptose + diphosphate. It participates in nucleotide-sugar biosynthesis; ADP-L-glycero-beta-D-manno-heptose biosynthesis; ADP-L-glycero-beta-D-manno-heptose from D-glycero-beta-D-manno-heptose 7-phosphate: step 1/4. Its pathway is nucleotide-sugar biosynthesis; ADP-L-glycero-beta-D-manno-heptose biosynthesis; ADP-L-glycero-beta-D-manno-heptose from D-glycero-beta-D-manno-heptose 7-phosphate: step 3/4. Catalyzes the phosphorylation of D-glycero-D-manno-heptose 7-phosphate at the C-1 position to selectively form D-glycero-beta-D-manno-heptose-1,7-bisphosphate. In terms of biological role, catalyzes the ADP transfer from ATP to D-glycero-beta-D-manno-heptose 1-phosphate, yielding ADP-D-glycero-beta-D-manno-heptose. The sequence is that of Bifunctional protein HldE from Vibrio cholerae serotype O1 (strain ATCC 39541 / Classical Ogawa 395 / O395).